We begin with the raw amino-acid sequence, 623 residues long: C2H2-type transcription factor zfpA (623 aa).

The segment covering 202 to 219 (GLAVSSPMPNSGPHSRSV) has biased composition (polar residues). Disordered stretches follow at residues 202-256 (GLAV…EKGR) and 468-493 (SNKANSSLGSRPIMGNHNAVTKNGKA). The segment covering 227-239 (SISSTNSRRSQLS) has biased composition (low complexity). The C2H2-type zinc finger occupies 255–276 (GRCPHPDCGRVFKDLKAHMLTH).

The protein resides in the nucleus. Its function is as follows. Transcription factor involved in fungal growth and virulence potential. Negatively regulates antifungal drug susceptibility via transcriptional inhibition of the expressions of drug efflux pumps in a crzA-dependent way. Under the treatment of azoles, both zfpA and crzA transfer to nuclei and coregulate the expression of multidrug transporters and then keep normal drug susceptibility in fungal cells. This is C2H2-type transcription factor zfpA from Aspergillus fumigatus (strain CBS 144.89 / FGSC A1163 / CEA10) (Neosartorya fumigata).